A 318-amino-acid chain; its full sequence is Probable endolytic peptidoglycan transglycosylase RlpA (318 aa).

An N-terminal signal peptide occupies residues 1–21 (MMDKRVVAVAAVLWNVQMLFA). The tract at residues 121–191 (DPNAHASQQR…GVANTTDVPA (71 aa)) is disordered. Polar residues predominate over residues 125-137 (HASQQRNDRQTSP).

Belongs to the RlpA family.

Its function is as follows. Lytic transglycosylase with a strong preference for naked glycan strands that lack stem peptides. This chain is Probable endolytic peptidoglycan transglycosylase RlpA, found in Treponema pallidum (strain Nichols).